We begin with the raw amino-acid sequence, 251 residues long: Phosphate import ATP-binding protein PstB (251 aa).

The region spanning 5–246 is the ABC transporter domain; sequence IKIRGVNFFY…PRDKRTEDYI (242 aa). 37 to 44 is an ATP binding site; that stretch reads GPSGCGKS.

It belongs to the ABC transporter superfamily. Phosphate importer (TC 3.A.1.7) family. In terms of assembly, the complex is composed of two ATP-binding proteins (PstB), two transmembrane proteins (PstC and PstA) and a solute-binding protein (PstS).

The protein resides in the cell membrane. It carries out the reaction phosphate(out) + ATP + H2O = ADP + 2 phosphate(in) + H(+). Functionally, part of the ABC transporter complex PstSACB involved in phosphate import. Responsible for energy coupling to the transport system. This chain is Phosphate import ATP-binding protein PstB, found in Dehalococcoides mccartyi (strain CBDB1).